A 543-amino-acid polypeptide reads, in one-letter code: Protein SGE1 (543 aa).

The Cytoplasmic portion of the chain corresponds to 1-8 (MKSTLSLT). The helical transmembrane segment at 9–29 (LCVISLLLTLFLAALDIVIVV) threads the bilayer. The Extracellular portion of the chain corresponds to 30–41 (TLYDTIGIKFHD). The helical transmembrane segment at 42-62 (FGNIGWLVTGYALSNAVFMLL) threads the bilayer. At 63–79 (WGRLAEILGTKECLMIS) the chain is on the cytoplasmic side. The chain crosses the membrane as a helical span at residues 80–100 (VIVFEIGSLISALSNSMATLI). Residues 101 to 103 (SGR) are Extracellular-facing. Residues 104–124 (VVAGFGGSGIESLAFVVGTSI) form a helical membrane-spanning segment. Residues 125–131 (VRENHRG) are Cytoplasmic-facing. The chain crosses the membrane as a helical span at residues 132–152 (IMITALAISYVIAEGVGPFIG). Over 153-162 (GAFNEHLSWR) the chain is Extracellular. The chain crosses the membrane as a helical span at residues 163-183 (WCFYINLPIGAFAFIILAFCN). The Cytoplasmic segment spans residues 184-227 (TSGEPHQKMWLPSKIKKIMNYDYGELLKASFWKNTFEVLVFKLD). A helical membrane pass occupies residues 228 to 248 (MVGIILSSAGFTLLMLGLSFG). At 249–255 (GNNFPWN) the chain is on the extracellular side. Residues 256 to 276 (SGIIICFFTVGPILLLLFCAY) traverse the membrane as a helical segment. Residues 277–300 (DFHFLSLSGLHYDNKRIKPLLTWN) lie on the Cytoplasmic side of the membrane. A helical membrane pass occupies residues 301–321 (IASNCGIFTSSITGFLSCFAY). Residues 322 to 341 (ELQSAYLVQLYQLVFKKKPT) are Extracellular-facing. A helical membrane pass occupies residues 342–362 (LASIHLWELSIPAMIATMAIA). Residues 363–373 (YLNSKYGIIKP) lie on the Cytoplasmic side of the membrane. A helical transmembrane segment spans residues 374-394 (AIVFGVLCGIVGSGLFTLING). Topologically, residues 395–399 (ELSQS) are extracellular. A helical transmembrane segment spans residues 400 to 420 (IGYSILPGIAFGSIFQATLLS). Topologically, residues 421-443 (SQVQITSDDPDFQNKFIEVTAFN) are cytoplasmic. The helical transmembrane segment at 444 to 464 (SFAKSLGFAFGGNMGAMIFTA) threads the bilayer. At 465-508 (SLKNQMRSSQLNIPQFTSVETLLAYSTEHYDGPQSSLSKFINTA) the chain is on the extracellular side. A helical membrane pass occupies residues 509–529 (IHDVFYCALGCYALSFFFGIF). Residues 530-543 (TSSKKTTISAKKQQ) lie on the Cytoplasmic side of the membrane.

The protein belongs to the major facilitator superfamily.

Its subcellular location is the membrane. Drug export permease. Multi-copy suppressor of loss-of-function mutation of GAL11. Involved specifically in transcription of GAL4-dependent genes. Can link GAL4 with the basal transcription machinery if GAL11 is missing. Confers resistance to 10-N-nonyl acridine orange (NAO) and in general to cationic dyes. The sequence is that of Protein SGE1 (SGE1) from Saccharomyces cerevisiae (strain ATCC 204508 / S288c) (Baker's yeast).